We begin with the raw amino-acid sequence, 110 residues long: Large ribosomal subunit protein uL22 (110 aa).

This sequence belongs to the universal ribosomal protein uL22 family. In terms of assembly, part of the 50S ribosomal subunit.

Its function is as follows. This protein binds specifically to 23S rRNA; its binding is stimulated by other ribosomal proteins, e.g. L4, L17, and L20. It is important during the early stages of 50S assembly. It makes multiple contacts with different domains of the 23S rRNA in the assembled 50S subunit and ribosome. Functionally, the globular domain of the protein is located near the polypeptide exit tunnel on the outside of the subunit, while an extended beta-hairpin is found that lines the wall of the exit tunnel in the center of the 70S ribosome. The protein is Large ribosomal subunit protein uL22 of Acinetobacter baumannii (strain ACICU).